The primary structure comprises 317 residues: Protoheme IX farnesyltransferase (317 aa).

The next 8 helical transmembrane spans lie at 44–64 (IGLILLTLLGGWMGAAAANTF), 93–113 (HASVFAWTLTVVSFLWLWVLC), 116–136 (VLAGLFILLTIFFYIFVYTKY), 143–163 (LNIVWGGAAGCMPVVVGWAVI), 178–198 (AIVLFMVIFFWTPPHTWALAM), 221–241 (VTRQIVWYTVATVLTTFLLIP), 243–263 (ASWIHAIIAVVSGVWFLVMAV), and 288–308 (LAVYFVGLSIDAVLGWETIGG).

Belongs to the UbiA prenyltransferase family. Protoheme IX farnesyltransferase subfamily.

It is found in the cell membrane. The catalysed reaction is heme b + (2E,6E)-farnesyl diphosphate + H2O = Fe(II)-heme o + diphosphate. It participates in porphyrin-containing compound metabolism; heme O biosynthesis; heme O from protoheme: step 1/1. Functionally, converts heme B (protoheme IX) to heme O by substitution of the vinyl group on carbon 2 of heme B porphyrin ring with a hydroxyethyl farnesyl side group. This chain is Protoheme IX farnesyltransferase, found in Corynebacterium diphtheriae (strain ATCC 700971 / NCTC 13129 / Biotype gravis).